The primary structure comprises 305 residues: 2-methoxy-6-polyprenyl-1,4-benzoquinol methylase, mitochondrial (305 aa).

The N-terminal 34 residues, 1–34, are a transit peptide targeting the mitochondrion; that stretch reads MSRLRAPVAKFLADGLKGIRSTALAGSRLSNCRY. Residues threonine 117, aspartate 143, and 173-174 each bind S-adenosyl-L-methionine; that span reads NA.

This sequence belongs to the class I-like SAM-binding methyltransferase superfamily. MenG/UbiE family. In terms of assembly, component of a multi-subunit COQ enzyme complex, composed of at least COQ3, COQ4, COQ5, COQ6, COQ7 and COQ9.

Its subcellular location is the mitochondrion inner membrane. The catalysed reaction is 2-methoxy-6-(all-trans-decaprenyl)benzene-1,4-diol + S-adenosyl-L-methionine = 5-methoxy-2-methyl-3-(all-trans-decaprenyl)benzene-1,4-diol + S-adenosyl-L-homocysteine + H(+). It functions in the pathway cofactor biosynthesis; ubiquinone biosynthesis. Methyltransferase required for the conversion of 2-decaprenyl-6-methoxy-1,4-benzoquinol (DDMQH2) to 2-decaprenyl-3-methyl-6-methoxy-1,4-benzoquinol (DMQH2). The protein is 2-methoxy-6-polyprenyl-1,4-benzoquinol methylase, mitochondrial of Schizosaccharomyces pombe (strain 972 / ATCC 24843) (Fission yeast).